A 236-amino-acid polypeptide reads, in one-letter code: Eukaryotic translation initiation factor 3 subunit J (236 aa).

Residues 1–86 (MADDWESAAD…KEEEEQKRLA (86 aa)) are disordered. Acidic residues predominate over residues 28–46 (GEDDDEDVKESWEDEEEKK). Basic and acidic residues-rich tracts occupy residues 47–58 (DEEKPTKTEAPV) and 68–86 (AKLE…KRLA). Positions 61–115 (KPNKALKAKLEEQERLKEEEEQKRLAEMTPEEKLAEKLRLQKIQEESDLKSALET) form a coiled coil.

This sequence belongs to the eIF-3 subunit J family. In terms of assembly, component of the eukaryotic translation initiation factor 3 (eIF-3) complex. The eIF-3 complex interacts with pix.

It is found in the cytoplasm. In terms of biological role, component of the eukaryotic translation initiation factor 3 (eIF-3) complex, which is involved in protein synthesis of a specialized repertoire of mRNAs and, together with other initiation factors, stimulates binding of mRNA and methionyl-tRNAi to the 40S ribosome. The eIF-3 complex specifically targets and initiates translation of a subset of mRNAs involved in cell proliferation. The polypeptide is Eukaryotic translation initiation factor 3 subunit J (Drosophila mojavensis (Fruit fly)).